A 178-amino-acid polypeptide reads, in one-letter code: Caveolin-1 (178 aa).

Ser2 is modified (N-acetylserine). Residue Ser2 is modified to Phosphoserine. Residues 2-94 (SGGKYVDSEG…WKASFTTFTV (93 aa)) are required for homooligomerization. The Cytoplasmic segment spans residues 2 to 104 (SGGKYVDSEG…TKYWFYRLLS (103 aa)). The residue at position 5 (Lys5) is an N6-acetyllysine; alternate. Residue Lys5 forms a Glycyl lysine isopeptide (Lys-Gly) (interchain with G-Cter in ubiquitin); alternate linkage. The residue at position 6 (Tyr6) is a Phosphotyrosine. At Ser9 the chain carries Phosphoserine. At Tyr14 the chain carries Phosphotyrosine; by ABL1. Tyr25 is modified (phosphotyrosine). Residues Lys26, Lys30, Lys39, Lys47, and Lys57 each participate in a glycyl lysine isopeptide (Lys-Gly) (interchain with G-Cter in ubiquitin) cross-link. The tract at residues 82 to 94 (DGIWKASFTTFTV) is interaction with CAVIN3. Residues 105–125 (ALFGIPMALIWGIYFAILSFL) constitute an intramembrane region (helical). Over 126-178 (HIWAVVPCIKSFLIEIQCISRVYSIYVHTFCDPLFEAIGKIFSNVRINLQKEI) the chain is Cytoplasmic. Positions 131-142 (VPCIKSFLIEIQ) are interacts with SPRY1, SPRY2, SPRY3 and SPRY4. S-palmitoyl cysteine attachment occurs at residues Cys133, Cys143, and Cys156. The tract at residues 149–160 (SIYVHTFCDPLF) is interacts with SPRY1, SPRY2, and SPRY4. Residues 167–178 (FSNVRINLQKEI) form an interacts with SPRY1, SPRY2, SPRY3 and SPRY4 region.

It belongs to the caveolin family. As to quaternary structure, homooligomer. Interacts with GLIPR2. Interacts with NOSTRIN. Interacts with SNAP25 and STX1A. Interacts (via the N-terminus) with DPP4; the interaction is direct. Interacts with CTNNB1, CDH1 and JUP. Interacts with PACSIN2; this interaction induces membrane tubulation. Interacts with SLC7A9. Interacts with BMX and BTK. Interacts with TGFBR1. Interacts with CAVIN3 (via leucine-zipper domain) in a cholesterol-sensitive manner. Interacts with CAVIN1. Interacts with EHD2 in a cholesterol-dependent manner. Forms a ternary complex with UBXN6 and VCP; mediates CAV1 targeting to lysosomes for degradation. Interacts with ABCG1; this interaction regulates ABCG1-mediated cholesterol efflux. Interacts with NEU3; this interaction enhances NEU3 sialidase activity within caveola. Interacts (via C-terminus) with SPRY1, SPRY2 (via C-terminus), SPRY3, and SPRY4. Interacts with IGFBP5; this interaction allows trafficking of IGFBP5 from the plasma membrane to the nucleus. In terms of processing, phosphorylated at Tyr-14 by ABL1 in response to oxidative stress. Post-translationally, ubiquitinated. Undergo monoubiquitination and multi- and/or polyubiquitination. Monoubiquitination of N-terminal lysines promotes integration in a ternary complex with UBXN6 and VCP which promotes oligomeric CAV1 targeting to lysosomes for degradation. Ubiquitinated by ZNRF1; leading to degradation and modulation of the TLR4-mediated immune response.

It localises to the golgi apparatus membrane. Its subcellular location is the cell membrane. It is found in the membrane. The protein localises to the caveola. The protein resides in the membrane raft. Its function is as follows. May act as a scaffolding protein within caveolar membranes. Forms a stable heterooligomeric complex with CAV2 that targets to lipid rafts and drives caveolae formation. Mediates the recruitment of CAVIN proteins (CAVIN1/2/3/4) to the caveolae. Interacts directly with G-protein alpha subunits and can functionally regulate their activity. Involved in the costimulatory signal essential for T-cell receptor (TCR)-mediated T-cell activation. Its binding to DPP4 induces T-cell proliferation and NF-kappa-B activation in a T-cell receptor/CD3-dependent manner. Recruits CTNNB1 to caveolar membranes and may regulate CTNNB1-mediated signaling through the Wnt pathway. Negatively regulates TGFB1-mediated activation of SMAD2/3 by mediating the internalization of TGFBR1 from membrane rafts leading to its subsequent degradation. Binds 20(S)-hydroxycholesterol (20(S)-OHC). This is Caveolin-1 (CAV1) from Equus caballus (Horse).